The chain runs to 471 residues: Cytolysin (471 aa).

Positions 1-20 are cleaved as a signal peptide; sequence MKKMTLFTLSLLATAVQVGA. In terms of domain architecture, Ricin B-type lectin spans 338 to 465; the sequence is AHVTLQSLSN…EANQARWKPT (128 aa).

Belongs to the HlyA hemolysin family.

In terms of biological role, bacterial hemolysins are exotoxins that attack blood cell membranes and cause cell rupture by mechanisms not clearly defined. In Vibrio vulnificus (strain CMCP6), this protein is Cytolysin (vvhA).